An 88-amino-acid polypeptide reads, in one-letter code: UPF0250 protein Ssed_3490 (88 aa).

This sequence belongs to the UPF0250 family.

This Shewanella sediminis (strain HAW-EB3) protein is UPF0250 protein Ssed_3490.